The sequence spans 286 residues: Gap junction alpha-6 protein (286 aa).

Residues 1-23 (MSDWSALHQLLEKVQPYSTAGGK) lie on the Cytoplasmic side of the membrane. Residues 24-41 (VWIKVLFIFRILLLGTAI) traverse the membrane as a helical segment. Residues 42–76 (ESAWSDEQFEFHCNTQQPGCENVCYDQAFPISHVR) are Extracellular-facing. The chain crosses the membrane as a helical span at residues 77 to 99 (LWVLQVIFVSVPTLLHLAHVYYV). Over 100–151 (IRQNEKLKKQEEEELKVAHFNGASGERRLQKHTGKHIKCGSKEHGNRKMRGR) the chain is Cytoplasmic. Residues 152–174 (LLLTYMASIFFKSVFEVAFLLIQ) traverse the membrane as a helical segment. Residues 175–209 (WYLYGFTLSAVYICEQSPCPHRVDCFLSRPTEKTI) lie on the Extracellular side of the membrane. A helical transmembrane segment spans residues 210–232 (FILFMLVVSMVSFVLNVIELFYV). The Cytoplasmic portion of the chain corresponds to 233–286 (LFKAIKNHLGNEKEEVYCNPVELQKPSCVSSSAVLTTICSSDQVVPVGLSSFYM).

The protein belongs to the connexin family. Alpha-type (group II) subfamily. A connexon is composed of a hexamer of connexins. In terms of tissue distribution, expressed in testis.

The protein resides in the cell membrane. It is found in the cell junction. The protein localises to the gap junction. One gap junction consists of a cluster of closely packed pairs of transmembrane channels, the connexons, through which materials of low MW diffuse from one cell to a neighboring cell. In Rattus norvegicus (Rat), this protein is Gap junction alpha-6 protein (Gja6).